The sequence spans 623 residues: Chaperone protein DnaK (623 aa).

At Thr-175 the chain carries Phosphothreonine; by autocatalysis. The interval 578-623 (ANPEGAPGAGFDPNNMGGANAGNASAGNDKKDDNVVDADFKVEDDK) is disordered. A compositionally biased stretch (low complexity) spans 591–604 (NNMGGANAGNASAG). A compositionally biased stretch (basic and acidic residues) spans 605–623 (NDKKDDNVVDADFKVEDDK).

The protein belongs to the heat shock protein 70 family.

In terms of biological role, acts as a chaperone. In Clostridium botulinum (strain 657 / Type Ba4), this protein is Chaperone protein DnaK.